Consider the following 495-residue polypeptide: Hydroxyneurosporene desaturase (495 aa).

The protein belongs to the carotenoid/retinoid oxidoreductase family.

It carries out the reaction rhodopin + A = (3E)-3,4-didehydrorhodopin + AH2. It functions in the pathway carotenoid biosynthesis; spheroidene biosynthesis. In terms of biological role, catalyzes the introduction of C-3,4 double bonds into 1-hydroxyneurosporene (1-HO-Neu) to yield demethylspheroidene (DMS). It prefer the acyclic carotenoids such as 1-hydroxylycopene, and 1-hydroxy-gamma-carotene, whereas 1-hydroxy-3,4-didehydrolycopene and 1,1-dihydroxylycopene are much less effective. The chain is Hydroxyneurosporene desaturase (crtD) from Cereibacter sphaeroides (strain ATCC 17023 / DSM 158 / JCM 6121 / CCUG 31486 / LMG 2827 / NBRC 12203 / NCIMB 8253 / ATH 2.4.1.) (Rhodobacter sphaeroides).